The sequence spans 645 residues: COP9 signalosome complex subunit 10 (645 aa).

Acidic residues predominate over residues 1–45 (MSDEDNNYDDFMLSDDEGMESIEMEEETDDEDKQNIEINEDNSQD). A disordered region spans residues 1-63 (MSDEDNNYDD…HKQHEQGTFE (63 aa)). The span at 46–63 (DQDRGAARHKQHEQGTFE) shows a compositional bias: basic and acidic residues. The region spanning 348 to 543 (DLSFALMRYY…DLVYFGDENK (196 aa)) is the PCI domain.

In terms of assembly, component of a COP9 signalosome-like (CSN) complex, composed of at least RRI1/CSN5, CSN9, RRI2/CSN10, PCI8/CSN11, CSN12 and CSI1. In the complex, it probably interacts directly with CSN12.

It is found in the cytoplasm. It localises to the nucleus. Component of the COP9 signalosome (CSN) complex that acts as an regulator of the ubiquitin (Ubl) conjugation pathway by mediating the deneddylation of the cullin subunit of SCF-type E3 ubiquitin-protein ligase complexes. The CSN complex is involved in the regulation of the mating pheromone response. The protein is COP9 signalosome complex subunit 10 (RRI2) of Saccharomyces cerevisiae (strain ATCC 204508 / S288c) (Baker's yeast).